The primary structure comprises 1087 residues: Apoptosis-stimulating of p53 protein 1 (1087 aa).

Residues 82–122 (HEDSPTESSEQGARQTQEQRTQRSVVNVPGEKRTENGVGNP) form a disordered region. Over residues 87–106 (TESSEQGARQTQEQRTQRSV) the composition is skewed to polar residues. Residues Ser-332 and Ser-335 each carry the phosphoserine modification. Disordered regions lie at residues 374–415 (SSAA…GMEG), 442–721 (IGKG…PNIQ), and 734–878 (GMEG…TGHG). Over residues 393–405 (KQNSASVKSTQMT) the composition is skewed to polar residues. A compositionally biased stretch (pro residues) spans 445–458 (GPPPIPGVGKPLPP). A compositionally biased stretch (low complexity) spans 459–476 (SYGTYPSSGPLGPGSTSS). Residues 506 to 520 (NAPQPGSSQQIQQRI) show a composition bias toward polar residues. The span at 523–536 (PPSPTYPPAGPPAF) shows a compositional bias: pro residues. Arg-552 carries the post-translational modification Asymmetric dimethylarginine. The segment covering 570–589 (QTVNSSSIYSMYLQQATPPK) has biased composition (polar residues). The span at 610–625 (PVLPSGSASPSPLPFL) shows a compositional bias: low complexity. Residues Ser-679 and Ser-708 each carry the phosphoserine modification. Residues 805–831 (PQTTHQTAEPTEDNNNNVAPVPSTEQI) show a composition bias toward polar residues. ANK repeat units follow at residues 917-949 (EGITPLHNAVCAGHHHIVKFLLDFGVNVNAADS) and 950-982 (DGWTPLHCAASCNSVHLCKQLVESGAAIFASTI). The region spanning 1016 to 1078 (MNKGTVYALW…PKNLLGLYPR (63 aa)) is the SH3 domain.

The protein belongs to the ASPP family. Interacts with P53/TP53; the interaction promotes pro-apoptotic activity.

It is found in the cytoplasm. The protein resides in the nucleus. In terms of biological role, regulator that plays a central role in regulation of apoptosis via its interaction with p53/TP53. Regulates TP53 by enhancing the DNA binding and transactivation function of TP53 on the promoters of proapoptotic genes in vivo. The protein is Apoptosis-stimulating of p53 protein 1 (Ppp1r13b) of Mus musculus (Mouse).